The primary structure comprises 438 residues: Adenylyltransferase and sulfurtransferase UBA4 (438 aa).

ATP-binding positions include G81, D102, 109–113, K126, and 170–171; these read SNLHR and DH. Zn(2+)-binding residues include C212 and C215. Catalysis depends on C229, which acts as the Glycyl thioester intermediate; for adenylyltransferase activity. Positions 290 and 293 each coordinate Zn(2+). The Rhodanese domain occupies 340–436; sequence NKKKHILIDV…WSDDVDSKIP (97 aa). The active-site Cysteine persulfide intermediate; for sulfurtransferase activity is C396.

In the N-terminal section; belongs to the HesA/MoeB/ThiF family. UBA4 subfamily. It depends on Zn(2+) as a cofactor.

The protein resides in the cytoplasm. The protein localises to the cytosol. It functions in the pathway tRNA modification; 5-methoxycarbonylmethyl-2-thiouridine-tRNA biosynthesis. Functionally, plays a central role in 2-thiolation of mcm(5)S(2)U at tRNA wobble positions of cytosolic tRNA(Lys), tRNA(Glu) and tRNA(Gln). Acts by mediating the C-terminal thiocarboxylation of sulfur carrier URM1. Its N-terminus first activates URM1 as acyl-adenylate (-COAMP), then the persulfide sulfur on the catalytic cysteine is transferred to URM1 to form thiocarboxylation (-COSH) of its C-terminus. The reaction probably involves hydrogen sulfide that is generated from the persulfide intermediate and that acts as a nucleophile towards URM1. Subsequently, a transient disulfide bond is formed. Does not use thiosulfate as sulfur donor; NFS1 probably acting as a sulfur donor for thiocarboxylation reactions. Prior mcm(5) tRNA modification by the elongator complex is required for 2-thiolation. May also be involved in protein urmylation. This chain is Adenylyltransferase and sulfurtransferase UBA4, found in Candida albicans (strain SC5314 / ATCC MYA-2876) (Yeast).